Reading from the N-terminus, the 541-residue chain is ATP synthase subunit beta (541 aa).

Residues 1 to 65 form a disordered region; it reads MAKAVTSSKG…TPVKKEERAK (65 aa). Basic and acidic residues-rich tracts occupy residues 25-36 and 52-65; these read VKKDASKSKDAS and AAKD…ERAK. 214–221 provides a ligand contact to ATP; that stretch reads GGAGVGKT.

Belongs to the ATPase alpha/beta chains family. In terms of assembly, F-type ATPases have 2 components, CF(1) - the catalytic core - and CF(0) - the membrane proton channel. CF(1) has five subunits: alpha(3), beta(3), gamma(1), delta(1), epsilon(1). CF(0) has three main subunits: a(1), b(2) and c(9-12). The alpha and beta chains form an alternating ring which encloses part of the gamma chain. CF(1) is attached to CF(0) by a central stalk formed by the gamma and epsilon chains, while a peripheral stalk is formed by the delta and b chains.

The protein localises to the cell inner membrane. It catalyses the reaction ATP + H2O + 4 H(+)(in) = ADP + phosphate + 5 H(+)(out). In terms of biological role, produces ATP from ADP in the presence of a proton gradient across the membrane. The catalytic sites are hosted primarily by the beta subunits. This Bartonella tribocorum (strain CIP 105476 / IBS 506) protein is ATP synthase subunit beta.